Reading from the N-terminus, the 86-residue chain is Neurotoxin LmNaTx1 (86 aa).

The first 18 residues, 1-18, serve as a signal peptide directing secretion; sequence MKILIIFVIAITVVGVQS. The LCN-type CS-alpha/beta domain maps to 19–85; the sequence is KDGYPIYSTG…VWTYAENTCG (67 aa). 4 disulfides stabilise this stretch: Cys-33–Cys-84, Cys-37–Cys-58, Cys-44–Cys-65, and Cys-48–Cys-67. The residue at position 84 (Cys-84) is a Cysteine amide.

This sequence belongs to the long (4 C-C) scorpion toxin superfamily. Sodium channel inhibitor family. Beta subfamily. Expressed by the venom gland.

Its subcellular location is the secreted. Functionally, binds voltage-independently at site-4 of sodium channels (Nav) and shift the voltage of activation toward more negative potentials thereby affecting sodium channel activation and promoting spontaneous and repetitive firing. In Lychas mucronatus (Chinese swimming scorpion), this protein is Neurotoxin LmNaTx1.